We begin with the raw amino-acid sequence, 101 residues long: Small ribosomal subunit protein uS14A (101 aa).

The interval Ile-31–Arg-69 is disordered. Positions Pro-38–Arg-53 are enriched in basic and acidic residues.

Belongs to the universal ribosomal protein uS14 family. Part of the 30S ribosomal subunit. Contacts proteins S3 and S10.

In terms of biological role, binds 16S rRNA, required for the assembly of 30S particles and may also be responsible for determining the conformation of the 16S rRNA at the A site. The sequence is that of Small ribosomal subunit protein uS14A from Saccharopolyspora erythraea (strain ATCC 11635 / DSM 40517 / JCM 4748 / NBRC 13426 / NCIMB 8594 / NRRL 2338).